The primary structure comprises 1515 residues: Lysophospholipase nte1 (1515 aa).

Residues 1–59 lie on the Cytoplasmic side of the membrane; the sequence is MESLSNLGNAMSSVLSETTSTTATAILADPTEALSSVVALASDAVSKATSDVVPEHTPT. Residues 60 to 80 traverse the membrane as a helical segment; the sequence is SWFTIILWLLHRISSVLYFVI. The Lumenal segment spans residues 81 to 102; that stretch reads KLTTITTPTFLFNIFSTSLTVT. Residues 103 to 123 traverse the membrane as a helical segment; sequence MNATTLVLIMLFMMAGVTWVV. The Cytoplasmic segment spans residues 124–1515; it reads RYRYLNMYSR…RTMAPRRASI (1392 aa). 3 disordered regions span residues 278–303, 519–580, and 617–639; these read MHDT…GYPM, VTAT…TPRN, and VNPD…SRGG. 2 stretches are compositionally biased toward polar residues: residues 543–554 and 566–579; these read LTNTQQLKSGPA and PRPQ…STPR. A nucleoside 3',5'-cyclic phosphate is bound by residues 670–789 and 835–955; these read SPVP…LAGY and RLTE…IAAR. Positions 1212–1376 constitute a PNPLA domain; the sequence is LVLGGGGARG…IDNLTVSRMK (165 aa). The GXGXXG signature appears at 1216–1221; that stretch reads GGGARG. The short motif at 1243-1247 is the GXSXG element; it reads GTSIG. Catalysis depends on Ser-1245, which acts as the Nucleophile. Asp-1363 acts as the Proton acceptor in catalysis. Positions 1363 to 1365 match the DGA/G motif; sequence DGG.

The protein belongs to the NTE family.

The protein resides in the endoplasmic reticulum membrane. It carries out the reaction a 1-acyl-sn-glycero-3-phosphocholine + H2O = sn-glycerol 3-phosphocholine + a fatty acid + H(+). Its activity is regulated as follows. Inhibited by organophosphorus esters. Functionally, intracellular phospholipase B that catalyzes the double deacylation of phosphatidylcholine (PC) to glycerophosphocholine (GroPCho). Plays an important role in membrane lipid homeostasis. Responsible for the rapid PC turnover in response to inositol, elevated temperatures, or when choline is present in the growth medium. This is Lysophospholipase nte1 (nte1) from Neurospora crassa (strain ATCC 24698 / 74-OR23-1A / CBS 708.71 / DSM 1257 / FGSC 987).